Reading from the N-terminus, the 400-residue chain is Nicotinate phosphoribosyltransferase (400 aa).

The residue at position 220 (histidine 220) is a Phosphohistidine; by autocatalysis.

This sequence belongs to the NAPRTase family. Post-translationally, transiently phosphorylated on a His residue during the reaction cycle. Phosphorylation strongly increases the affinity for substrates and increases the rate of nicotinate D-ribonucleotide production. Dephosphorylation regenerates the low-affinity form of the enzyme, leading to product release.

The enzyme catalyses nicotinate + 5-phospho-alpha-D-ribose 1-diphosphate + ATP + H2O = nicotinate beta-D-ribonucleotide + ADP + phosphate + diphosphate. Its pathway is cofactor biosynthesis; NAD(+) biosynthesis; nicotinate D-ribonucleotide from nicotinate: step 1/1. Catalyzes the synthesis of beta-nicotinate D-ribonucleotide from nicotinate and 5-phospho-D-ribose 1-phosphate at the expense of ATP. The protein is Nicotinate phosphoribosyltransferase of Escherichia coli (strain K12 / MC4100 / BW2952).